The primary structure comprises 859 residues: Rod cGMP-specific 3',5'-cyclic phosphodiesterase subunit alpha (859 aa).

N-acetylglycine is present on Gly2. GAF domains are found at residues 73 to 222 (QAEK…NLIM) and 254 to 431 (DIER…GWSV). A PDEase domain is found at 483-816 (EEEELAEILQ…KEWKALADEY (334 aa)). The Proton donor role is filled by His559. His563, His599, Asp600, and Asp720 together coordinate a divalent metal cation. The disordered stretch occupies residues 823-859 (LEEEKQKQQAAKQAASGNQPGGNPLQGAPASKSCCIQ). Cys856 bears the Cysteine methyl ester mark. Cys856 is lipidated: S-farnesyl cysteine. The propeptide at 857 to 859 (CIQ) is removed in mature form.

It belongs to the cyclic nucleotide phosphodiesterase family. As to quaternary structure, oligomer composed of two catalytic chains (alpha and beta), an inhibitory chain (gamma) and the delta chain. A divalent metal cation serves as cofactor.

It is found in the cell membrane. The protein resides in the cell projection. It localises to the cilium. Its subcellular location is the photoreceptor outer segment. The enzyme catalyses 3',5'-cyclic GMP + H2O = GMP + H(+). In terms of biological role, rod-specific cGMP phosphodiesterase that catalyzes the hydrolysis of 3',5'-cyclic GMP. This protein participates in processes of transmission and amplification of the visual signal. This is Rod cGMP-specific 3',5'-cyclic phosphodiesterase subunit alpha from Mus musculus (Mouse).